The primary structure comprises 255 residues: GTP cyclohydrolase III (255 aa).

The protein belongs to the archaeal-type GTP cyclohydrolase family.

The catalysed reaction is GTP + 3 H2O = 2-amino-5-formylamino-6-(5-phospho-D-ribosylamino)pyrimidin-4(3H)-one + 2 phosphate + 2 H(+). Catalyzes the formation of 2-amino-5-formylamino-6-ribofuranosylamino-4(3H)-pyrimidinone ribonucleotide monophosphate and inorganic phosphate from GTP. Also has an independent pyrophosphate phosphohydrolase activity. In Methanosphaera stadtmanae (strain ATCC 43021 / DSM 3091 / JCM 11832 / MCB-3), this protein is GTP cyclohydrolase III.